The chain runs to 99 residues: Small ribosomal subunit protein bS20 (99 aa).

It belongs to the bacterial ribosomal protein bS20 family.

Functionally, binds directly to 16S ribosomal RNA. In Thermotoga neapolitana (strain ATCC 49049 / DSM 4359 / NBRC 107923 / NS-E), this protein is Small ribosomal subunit protein bS20.